Reading from the N-terminus, the 146-residue chain is Acidic phospholipase A2 2 (146 aa).

An N-terminal signal peptide occupies residues 1-21 (MTPAHLLILAAVCVSPLGASS). A propeptide spanning residues 22 to 27 (SRPMPL) is cleaved from the precursor. 7 disulfide bridges follow: C38-C98, C53-C145, C55-C71, C70-C126, C77-C119, C87-C112, and C105-C117. Y54, G56, and G58 together coordinate Ca(2+). Residue H74 is part of the active site. D75 lines the Ca(2+) pocket. D120 is a catalytic residue.

Belongs to the phospholipase A2 family. Group I subfamily. D49 sub-subfamily. It depends on Ca(2+) as a cofactor. In terms of tissue distribution, expressed by the venom gland.

It is found in the secreted. It catalyses the reaction a 1,2-diacyl-sn-glycero-3-phosphocholine + H2O = a 1-acyl-sn-glycero-3-phosphocholine + a fatty acid + H(+). Its function is as follows. PLA2 catalyzes the calcium-dependent hydrolysis of the 2-acyl groups in 3-sn-phosphoglycerides. The chain is Acidic phospholipase A2 2 from Naja atra (Chinese cobra).